An 83-amino-acid polypeptide reads, in one-letter code: Exodeoxyribonuclease 7 small subunit (83 aa).

Belongs to the XseB family. As to quaternary structure, heterooligomer composed of large and small subunits.

Its subcellular location is the cytoplasm. The catalysed reaction is Exonucleolytic cleavage in either 5'- to 3'- or 3'- to 5'-direction to yield nucleoside 5'-phosphates.. Its function is as follows. Bidirectionally degrades single-stranded DNA into large acid-insoluble oligonucleotides, which are then degraded further into small acid-soluble oligonucleotides. This Rhodopseudomonas palustris (strain ATCC BAA-98 / CGA009) protein is Exodeoxyribonuclease 7 small subunit.